A 524-amino-acid chain; its full sequence is Unconventional prefoldin RPB5 interactor (524 aa).

Disordered stretches follow at residues 1-20 (MEAP…LRAP), 284-320 (SVNG…EDNS), and 335-373 (VRIN…ELPM). Over residues 296-307 (DDGDNNDDGGDS) the composition is skewed to acidic residues. Serine 361 carries the post-translational modification Phosphoserine; by RPS6KB1. Serine 431 is modified (phosphoserine).

Belongs to the RNA polymerase II subunit 5-mediating protein family. Homodimer. Component of the PAQosome complex which is responsible for the biogenesis of several protein complexes and which consists of R2TP complex members RUVBL1, RUVBL2, RPAP3 and PIH1D1, URI complex members PFDN2, PFDN6, PDRG1, UXT and URI1 as well as ASDURF, POLR2E and DNAAF10/WDR92. Interacts with POLR2E/RPB5, RUVBL2 and RUVBL1. Interacts with PFDN2, PFDN4 and STAP1; the interactions are phosphorylation-dependent and occur in a growth-dependent manner in the mitochondrion. Interacts with UXT. Interacts with PPP1CC; the interaction is phosphorylation-dependent and occurs in a growth factor-dependent manner. Interacts (via the middle C-terminal region) with GTF2F1 and GTF2F2. Interacts with DMAP1. Interacts with TSC1 and TSC2. Interacts with PRPF8 and EFTUD2 in a ZNHIT2-dependent manner. In terms of processing, phosphorylated. Phosphorylation occurs essentially on serine residues. Phosphorylation occurs in response to androgen treatment in prostate cancer cells in a mTOR-dependent manner. Phosphorylated; hyperhosphorylated in mitochondria in a mTORC-dependent signaling pathway. Phosphorylated at Ser-361 by RPS6KB1 in a growth factor- and rapamycin-dependent manner. S6K1-mediated mitochondrial phosphorylation at Ser-361 disrupts the URI1-PPP1CC complex in the mitochondrion, relieves PPP1CC phosphatase inhibition activity and hence engages a negative feedback diminishing RPS6KB1 kinase activity, preventing sustained S6K1-dependent signaling.

The protein localises to the nucleus. It localises to the cytoplasm. Its subcellular location is the mitochondrion. It is found in the cell projection. The protein resides in the dendrite. Involved in gene transcription regulation. Acts as a transcriptional repressor in concert with the corepressor UXT to regulate androgen receptor (AR) transcription. May act as a tumor suppressor to repress AR-mediated gene transcription and to inhibit anchorage-independent growth in prostate cancer cells. Required for cell survival in ovarian cancer cells. Together with UXT, associates with chromatin to the NKX3-1 promoter region. Functionally, plays a central role in maintaining S6K1 signaling and BAD phosphorylation under normal growth conditions thereby protecting cells from potential deleterious effects of sustained S6K1 signaling. The URI1-PPP1CC complex acts as a central component of a negative feedback mechanism that counteracts excessive S6K1 survival signaling to BAD in response to growth factors. Mediates inhibition of PPP1CC phosphatase activity in mitochondria. Coordinates the regulation of nutrient-sensitive gene expression availability in a mTOR-dependent manner. Seems to be a scaffolding protein able to assemble a prefoldin-like complex that contains PFDs and proteins with roles in transcription and ubiquitination. The chain is Unconventional prefoldin RPB5 interactor (URI1) from Bos taurus (Bovine).